The sequence spans 322 residues: Solute carrier family 25 member 16 (322 aa).

Solcar repeat units lie at residues 34-120 (FYWL…YKTF), 128-219 (SGHV…LKSV), and 241-322 (LKTH…AVAF).

It belongs to the mitochondrial carrier (TC 2.A.29) family.

The protein localises to the mitochondrion inner membrane. Functionally, may be involved in the transport of coenzyme A in the mitochondrial matrix. Very little is known about the physiological function of this carrier. This chain is Solute carrier family 25 member 16, found in Rattus norvegicus (Rat).